The chain runs to 120 residues: MTEKLLHFIRTKSGSMHWWLQRFLAILLAPIILYLLFDVAIYIGQQSDPTVMMFLNRIFNHNSIFIFITSVILIWHVRGGMEVIIEDYVHGEKTRIVSIFLIRVIAIEIMEYLYKCSIIF.

The Mitochondrial matrix portion of the chain corresponds to 1 to 17 (MTEKLLHFIRTKSGSMH). Residues 18–38 (WWLQRFLAILLAPIILYLLFD) traverse the membrane as a helical segment. Residues 39–63 (VAIYIGQQSDPTVMMFLNRIFNHNS) are Mitochondrial intermembrane-facing. A helical membrane pass occupies residues 64-85 (IFIFITSVILIWHVRGGMEVII). H76 is a heme binding site. Topologically, residues 86-95 (EDYVHGEKTR) are mitochondrial matrix. An a ubiquinone-binding site is contributed by Y88. A helical transmembrane segment spans residues 96–120 (IVSIFLIRVIAIEIMEYLYKCSIIF).

As to quaternary structure, part of an enzyme complex containing four subunits: a flavoprotein, an iron-sulfur protein, plus two membrane-anchoring proteins. Requires heme as cofactor.

It localises to the mitochondrion inner membrane. The protein operates within carbohydrate metabolism; tricarboxylic acid cycle. Functionally, membrane-anchoring subunit of succinate dehydrogenase (SDH). In Reclinomonas americana, this protein is Succinate dehydrogenase membrane anchor subunit (SDH4).